The primary structure comprises 172 residues: C-phycocyanin beta chain (172 aa).

Residue Asn-72 is modified to N4-methylasparagine. Residues Cys-82 and Cys-153 each contribute to the (2R,3E)-phycocyanobilin site.

The protein belongs to the phycobiliprotein family. As to quaternary structure, heterodimer of an alpha and a beta subunit, which further assembles into trimers and the trimers into hexamers. The basic functional unit of phycobiliproteins is a ring-shaped hexamer formed from two back-to-back trimers contacting via the alpha chain subunits. The trimers are composed of alpha/beta subunit heterodimers arranged around a three-fold axis of symmetry. The phycoerythrins also contain a gamma subunit which is located in the center of the hexamer. Post-translationally, contains two covalently linked bilin chromophores.

The protein resides in the plastid. Its subcellular location is the chloroplast thylakoid membrane. In terms of biological role, light-harvesting photosynthetic bile pigment-protein from the phycobiliprotein complex (phycobilisome, PBS). Phycocyanin is the major phycobiliprotein in the PBS rod. This Pyropia yezoensis (Susabi-nori) protein is C-phycocyanin beta chain (cpcB).